Reading from the N-terminus, the 193-residue chain is Flagellin B3 (193 aa).

A propeptide spanning residues 1-12 is cleaved from the precursor; the sequence is MFEFITDEDERG.

The protein belongs to the archaeal flagellin family. In terms of processing, glycosylated.

The protein localises to the archaeal flagellum. Flagellin is the subunit protein which polymerizes to form the filaments of archaeal flagella. The protein is Flagellin B3 (flaB3) of Halobacterium salinarum (strain ATCC 700922 / JCM 11081 / NRC-1) (Halobacterium halobium).